A 1488-amino-acid polypeptide reads, in one-letter code: Chromosome partition protein MukB (1488 aa).

34–41 (GGNGAGKS) contacts ATP. 3 coiled-coil regions span residues 326–418 (LEAD…QYNQ), 444–472 (LDTFQAKEQEATEKLLSLEQKMSVAQTAH), and 509–602 (RHLA…QRAP). A flexible hinge region spans residues 666–783 (PGGAEDQRLN…SLPIFGRAAR (118 aa)). 3 coiled-coil regions span residues 835 to 923 (EAEI…AKLE), 977 to 1116 (EMLS…AKAG), and 1209 to 1265 (VEAI…LQSV). The tract at residues 1049 to 1074 (ADSGAEERARQRRDELHAQLSNNRSR) is disordered. Residues 1051–1065 (SGAEERARQRRDELH) show a composition bias toward basic and acidic residues.

Belongs to the SMC family. MukB subfamily. As to quaternary structure, homodimerization via its hinge domain. Binds to DNA via its C-terminal region. Interacts, and probably forms a ternary complex, with MukE and MukF via its C-terminal region. The complex formation is stimulated by calcium or magnesium. Interacts with tubulin-related protein FtsZ.

It is found in the cytoplasm. The protein resides in the nucleoid. In terms of biological role, plays a central role in chromosome condensation, segregation and cell cycle progression. Functions as a homodimer, which is essential for chromosome partition. Involved in negative DNA supercoiling in vivo, and by this means organize and compact chromosomes. May achieve or facilitate chromosome segregation by condensation DNA from both sides of a centrally located replisome during cell division. This chain is Chromosome partition protein MukB, found in Salmonella schwarzengrund (strain CVM19633).